The chain runs to 99 residues: DNA-binding protein HU (99 aa).

Residues 67-86 form a disordered region; sequence REGRNPKTGAKMKIDAYNQP.

This sequence belongs to the bacterial histone-like protein family. In terms of assembly, homodimer.

Histone-like DNA-binding protein which is capable of wrapping DNA to stabilize it, and thus to prevent its denaturation under extreme environmental conditions. The polypeptide is DNA-binding protein HU (hup) (Rickettsia conorii (strain ATCC VR-613 / Malish 7)).